A 217-amino-acid polypeptide reads, in one-letter code: Glycerol-3-phosphate acyltransferase (217 aa).

5 consecutive transmembrane segments (helical) span residues 1–21 (MAWAISGLLVILGYLLGSIPT), 54–74 (TAAIAVLIIDMLKAMVAVGGV), 84–104 (AIVPLDWKPWLIVTVASAAIL), 126–146 (VLLVLNPLVALGALASFLFML), and 165–185 (LLMLVLHQPLAYILFAILAGI).

Belongs to the PlsY family. Probably interacts with PlsX.

The protein resides in the cell inner membrane. It catalyses the reaction an acyl phosphate + sn-glycerol 3-phosphate = a 1-acyl-sn-glycero-3-phosphate + phosphate. The protein operates within lipid metabolism; phospholipid metabolism. Its function is as follows. Catalyzes the transfer of an acyl group from acyl-phosphate (acyl-PO(4)) to glycerol-3-phosphate (G3P) to form lysophosphatidic acid (LPA). This enzyme utilizes acyl-phosphate as fatty acyl donor, but not acyl-CoA or acyl-ACP. In Rippkaea orientalis (strain PCC 8801 / RF-1) (Cyanothece sp. (strain PCC 8801)), this protein is Glycerol-3-phosphate acyltransferase.